The chain runs to 281 residues: Bifunctional protein FolD 1 (281 aa).

NADP(+)-binding positions include glycine 165–serine 167, serine 190, and isoleucine 231.

This sequence belongs to the tetrahydrofolate dehydrogenase/cyclohydrolase family. In terms of assembly, homodimer.

The enzyme catalyses (6R)-5,10-methylene-5,6,7,8-tetrahydrofolate + NADP(+) = (6R)-5,10-methenyltetrahydrofolate + NADPH. The catalysed reaction is (6R)-5,10-methenyltetrahydrofolate + H2O = (6R)-10-formyltetrahydrofolate + H(+). It functions in the pathway one-carbon metabolism; tetrahydrofolate interconversion. Functionally, catalyzes the oxidation of 5,10-methylenetetrahydrofolate to 5,10-methenyltetrahydrofolate and then the hydrolysis of 5,10-methenyltetrahydrofolate to 10-formyltetrahydrofolate. The polypeptide is Bifunctional protein FolD 1 (Desulfitobacterium hafniense (strain Y51)).